The chain runs to 148 residues: Cytochrome c oxidase subunit 6, mitochondrial (148 aa).

A mitochondrion-targeting transit peptide spans 1–40 (MASFFRTAVRGPSAGLFRAVARPQPIAARVSLFSTSSRFR).

This sequence belongs to the cytochrome c oxidase subunit 5A family. As to quaternary structure, component of the cytochrome c oxidase (complex IV, CIV), a multisubunit enzyme composed of 11 subunits. The complex is composed of a catalytic core of 3 subunits Cox1, Cox2 and Cox3, encoded in the mitochondrial DNA, and 8 supernumerary subunits Cox4, Cox5a/Cox5, Cox6, Cox7, Cox8, Cox7a/Cox9, Cox6b/Cox12 and Cox6a/Cox13, which are encoded in the nuclear genome. The complex exists as a monomer or a dimer and forms respiratory supercomplexes (SCs) in the inner mitochondrial membrane with NADH-ubiquinone oxidoreductase (complex I, CI) and ubiquinol-cytochrome c oxidoreductase (cytochrome b-c1 complex, complex III, CIII), resulting in various different assemblies (supercomplexes I(1)IV(1), I(1)III(3)IV(2), III(2)IV(1) and III(2)IV(2) as well as larger supercomplexes of compositions like I(1)III(2)IV(5-6)).

The protein resides in the mitochondrion inner membrane. The protein operates within energy metabolism; oxidative phosphorylation. In terms of biological role, component of the cytochrome c oxidase, the last enzyme in the mitochondrial electron transport chain which drives oxidative phosphorylation. The respiratory chain contains 3 multisubunit complexes succinate dehydrogenase (complex II, CII), ubiquinol-cytochrome c oxidoreductase (cytochrome b-c1 complex, complex III, CIII) and cytochrome c oxidase (complex IV, CIV), that cooperate to transfer electrons derived from NADH and succinate to molecular oxygen, creating an electrochemical gradient over the inner membrane that drives transmembrane transport and the ATP synthase. Cytochrome c oxidase is the component of the respiratory chain that catalyzes the reduction of oxygen to water. Electrons originating from reduced cytochrome c in the intermembrane space (IMS) are transferred via the dinuclear copper A center (CU(A)) of Cox2 and heme A of Cox1 to the active site in Cox1, a binuclear center (BNC) formed by heme A3 and copper B (CU(B)). The BNC reduces molecular oxygen to 2 water molecules using 4 electrons from cytochrome c in the IMS and 4 protons from the mitochondrial matrix. This is Cytochrome c oxidase subunit 6, mitochondrial (cox-6) from Neurospora crassa (strain ATCC 24698 / 74-OR23-1A / CBS 708.71 / DSM 1257 / FGSC 987).